The chain runs to 107 residues: uncharacterized protein (107 aa).

Belongs to the HesB/IscA family.

This is an uncharacterized protein from Azotobacter vinelandii.